The sequence spans 445 residues: Protein PRRC1 (445 aa).

Disordered regions lie at residues 1–71 (MMEE…PSAP) and 105–167 (PPVS…TGLL). Positions 27 to 49 (MSSTPVPLAATSSFSSPNVSSME) are enriched in polar residues. A compositionally biased stretch (pro residues) spans 59–71 (PQPPLPPVRPSAP). Residues S209 and S408 each carry the phosphoserine modification.

The protein belongs to the PRRC1 family. In terms of assembly, interacts with PRKAR1A; resulting in PKA activation. Ubiquitously expressed with higher expression in kidney, liver and placenta. Detected in embryonic kidney cells (HEK293 cells) (at protein level). In terms of tissue distribution, specifically expressed in liver.

The protein localises to the golgi apparatus. Its subcellular location is the cytoplasm. In terms of biological role, may act as a regulator of the protein kinase A (PKA) activity during embryonic development. The protein is Protein PRRC1 (PRRC1) of Homo sapiens (Human).